The following is a 200-amino-acid chain: Large ribosomal subunit protein bL25 (200 aa).

This sequence belongs to the bacterial ribosomal protein bL25 family. CTC subfamily. In terms of assembly, part of the 50S ribosomal subunit; part of the 5S rRNA/L5/L18/L25 subcomplex. Contacts the 5S rRNA. Binds to the 5S rRNA independently of L5 and L18.

Its function is as follows. This is one of the proteins that binds to the 5S RNA in the ribosome where it forms part of the central protuberance. The protein is Large ribosomal subunit protein bL25 of Pseudomonas fluorescens (strain SBW25).